A 123-amino-acid polypeptide reads, in one-letter code: Putative acidic leucine-rich nuclear phosphoprotein 32 family member C (123 aa).

LRR repeat units lie at residues 43–64, 65–87, 89–110, and 114–123; these read ELEF…PKLN, KLKK…AEKC, NLKH…ELLK, and NLKSLDLFNC.

This sequence belongs to the ANP32 family.

The polypeptide is Putative acidic leucine-rich nuclear phosphoprotein 32 family member C (Anp32c) (Mus musculus (Mouse)).